Consider the following 298-residue polypeptide: Probable prolyl 4-hydroxylase 4 (298 aa).

At 1–6 the chain is on the cytoplasmic side; the sequence is MARRGL. Residues 7 to 25 form a helical; Signal-anchor for type II membrane protein membrane-spanning segment; sequence LISFFAIFSVLLQSSTSLI. Over 26–298 the chain is Lumenal; it reads SSSSVFVNPS…GYCRRSCKAC (273 aa). Residue Asn-77 is glycosylated (N-linked (GlcNAc...) asparagine). One can recognise a Fe2OG dioxygenase domain in the interval 120–245; it reads NGEDIQVLRY…KWSATKWIHV (126 aa). The Fe cation site is built by His-138 and Asp-140. An N-linked (GlcNAc...) asparagine glycan is attached at Asn-164. His-226 serves as a coordination point for Fe cation. Lys-236 lines the 2-oxoglutarate pocket. N-linked (GlcNAc...) asparagine glycans are attached at residues Asn-257 and Asn-262. Residues 258 to 298 form the ShKT domain; the sequence is CTDMNESCERWAVLGECTKNPEYMVGTTELPGYCRRSCKAC. 3 disulfide bridges follow: Cys-258–Cys-298, Cys-265–Cys-291, and Cys-274–Cys-295.

It belongs to the P4HA family. Fe(2+) is required as a cofactor. The cofactor is L-ascorbate.

It is found in the endoplasmic reticulum membrane. It carries out the reaction L-prolyl-[collagen] + 2-oxoglutarate + O2 = trans-4-hydroxy-L-prolyl-[collagen] + succinate + CO2. In terms of biological role, catalyzes the post-translational formation of 4-hydroxyproline in -Xaa-Pro-Gly- sequences in proline-rich peptide sequences of plant glycoproteins and other proteins. Hydroxyprolines are important constituent of many plant cell wall glycoproteins such as extensins, hydroxyproline-rich glycoproteins, lectins and arabinogalactan proteins. The chain is Probable prolyl 4-hydroxylase 4 from Arabidopsis thaliana (Mouse-ear cress).